Reading from the N-terminus, the 161-residue chain is ATP synthase subunit b 1 (161 aa).

Residues 3 to 23 (FDASFFALVGLVLFFVLIAYL) form a helical membrane-spanning segment.

This sequence belongs to the ATPase B chain family. In terms of assembly, F-type ATPases have 2 components, F(1) - the catalytic core - and F(0) - the membrane proton channel. F(1) has five subunits: alpha(3), beta(3), gamma(1), delta(1), epsilon(1). F(0) has three main subunits: a(1), b(2) and c(10-14). The alpha and beta chains form an alternating ring which encloses part of the gamma chain. F(1) is attached to F(0) by a central stalk formed by the gamma and epsilon chains, while a peripheral stalk is formed by the delta and b chains.

The protein resides in the cell inner membrane. Its function is as follows. F(1)F(0) ATP synthase produces ATP from ADP in the presence of a proton or sodium gradient. F-type ATPases consist of two structural domains, F(1) containing the extramembraneous catalytic core and F(0) containing the membrane proton channel, linked together by a central stalk and a peripheral stalk. During catalysis, ATP synthesis in the catalytic domain of F(1) is coupled via a rotary mechanism of the central stalk subunits to proton translocation. In terms of biological role, component of the F(0) channel, it forms part of the peripheral stalk, linking F(1) to F(0). The sequence is that of ATP synthase subunit b 1 from Agrobacterium fabrum (strain C58 / ATCC 33970) (Agrobacterium tumefaciens (strain C58)).